The primary structure comprises 351 residues: Prostaglandin reductase 2 (351 aa).

Position 99–100 (99–100 (FY)) interacts with substrate. NADP(+) contacts are provided by residues 165-168 (GACG), Lys192, Tyr208, Asn231, 253-259 (CGQISQY), 287-289 (FLV), and Asn337. 288-290 (LVL) provides a ligand contact to substrate.

This sequence belongs to the NADP-dependent oxidoreductase L4BD family. As to quaternary structure, monomer.

The protein resides in the cytoplasm. The catalysed reaction is 13,14-dihydro-15-oxo-prostaglandin E2 + NAD(+) = 15-oxoprostaglandin E2 + NADH + H(+). The enzyme catalyses 13,14-dihydro-15-oxo-prostaglandin E2 + NADP(+) = 15-oxoprostaglandin E2 + NADPH + H(+). It catalyses the reaction 13,14-dihydro-15-oxo-PGF2alpha + NADP(+) = 15-oxoprostaglandin F2alpha + NADPH + H(+). It carries out the reaction 13,14-dihydro-15-oxo-prostaglandin E1 + NADP(+) = 15-oxoprostaglandin E1 + NADPH + H(+). The catalysed reaction is 13,14-dihydro-15-oxo-prostaglandin F1alpha + NADP(+) = 15-oxoprostaglandin F1alpha + NADPH + H(+). Functions as 15-oxo-prostaglandin 13-reductase and acts on 15-keto-PGE1, 15-keto-PGE2, 15-keto-PGE1-alpha and 15-keto-PGE2-alpha with highest activity towards 15-keto-PGE2. Overexpression represses transcriptional activity of PPARG and inhibits adipocyte differentiation. The sequence is that of Prostaglandin reductase 2 (PTGR2) from Pongo abelii (Sumatran orangutan).